We begin with the raw amino-acid sequence, 316 residues long: Porphobilinogen deaminase (316 aa).

An S-(dipyrrolylmethanemethyl)cysteine modification is found at Cys-245.

The protein belongs to the HMBS family. In terms of assembly, monomer. Dipyrromethane is required as a cofactor.

The catalysed reaction is 4 porphobilinogen + H2O = hydroxymethylbilane + 4 NH4(+). It functions in the pathway porphyrin-containing compound metabolism; protoporphyrin-IX biosynthesis; coproporphyrinogen-III from 5-aminolevulinate: step 2/4. Its pathway is porphyrin-containing compound metabolism; chlorophyll biosynthesis. In terms of biological role, tetrapolymerization of the monopyrrole PBG into the hydroxymethylbilane pre-uroporphyrinogen in several discrete steps. The sequence is that of Porphobilinogen deaminase from Prochlorococcus marinus (strain AS9601).